Reading from the N-terminus, the 151-residue chain is 3-hydroxyacyl-[acyl-carrier-protein] dehydratase FabZ (151 aa).

The active site involves His-54.

Belongs to the thioester dehydratase family. FabZ subfamily. Oligomer. The N-terminus is blocked.

It localises to the cytoplasm. The catalysed reaction is a (3R)-hydroxyacyl-[ACP] = a (2E)-enoyl-[ACP] + H2O. Its function is as follows. Involved in unsaturated fatty acids biosynthesis. Catalyzes the dehydration of short chain beta-hydroxyacyl-ACPs and long chain saturated and unsaturated beta-hydroxyacyl-ACPs. The sequence is that of 3-hydroxyacyl-[acyl-carrier-protein] dehydratase FabZ from Escherichia coli O9:H4 (strain HS).